The primary structure comprises 276 residues: Undecaprenyl-diphosphatase (276 aa).

6 helical membrane-spanning segments follow: residues 43–63 (RAMA…VWEF), 85–105 (GNLL…ADLI), 109–129 (LFNP…MLWA), 183–203 (AATE…AVYS), 214–234 (ADLP…MIAV), and 249–269 (FAWY…FGWV).

This sequence belongs to the UppP family.

It localises to the cell inner membrane. The enzyme catalyses di-trans,octa-cis-undecaprenyl diphosphate + H2O = di-trans,octa-cis-undecaprenyl phosphate + phosphate + H(+). Functionally, catalyzes the dephosphorylation of undecaprenyl diphosphate (UPP). Confers resistance to bacitracin. This is Undecaprenyl-diphosphatase from Pseudomonas putida (strain GB-1).